A 93-amino-acid polypeptide reads, in one-letter code: Cell division topological specificity factor (93 aa).

It belongs to the MinE family.

Prevents the cell division inhibition by proteins MinC and MinD at internal division sites while permitting inhibition at polar sites. This ensures cell division at the proper site by restricting the formation of a division septum at the midpoint of the long axis of the cell. This is Cell division topological specificity factor from Syntrophus aciditrophicus (strain SB).